A 169-amino-acid polypeptide reads, in one-letter code: Probable chorismate pyruvate-lyase (169 aa).

Residues R71, I110, and E150 each contribute to the substrate site.

The protein belongs to the UbiC family.

The protein localises to the cytoplasm. It carries out the reaction chorismate = 4-hydroxybenzoate + pyruvate. Its pathway is cofactor biosynthesis; ubiquinone biosynthesis. In terms of biological role, removes the pyruvyl group from chorismate, with concomitant aromatization of the ring, to provide 4-hydroxybenzoate (4HB) for the ubiquinone pathway. The sequence is that of Probable chorismate pyruvate-lyase from Acinetobacter baumannii (strain ATCC 17978 / DSM 105126 / CIP 53.77 / LMG 1025 / NCDC KC755 / 5377).